The sequence spans 502 residues: Maturase K (502 aa).

Belongs to the intron maturase 2 family. MatK subfamily.

It localises to the plastid. Its subcellular location is the chloroplast. Functionally, usually encoded in the trnK tRNA gene intron. Probably assists in splicing its own and other chloroplast group II introns. The chain is Maturase K from Vaccinium vitis-idaea (Mountain cranberry).